A 457-amino-acid chain; its full sequence is Acetylcholine receptor subunit alpha (457 aa).

The N-terminal stretch at 1-20 is a signal peptide; that stretch reads MELTAVLLLLGLCSAGTVLG. The Extracellular portion of the chain corresponds to 21–230; that stretch reads SEHETRLVAK…ITYHFVMQRL (210 aa). Intrachain disulfides connect Cys-148–Cys-162 and Cys-212–Cys-213. Residue Asn-161 is glycosylated (N-linked (GlcNAc...) asparagine). The next 3 helical transmembrane spans lie at 231-255, 263-281, and 297-316; these read PLYF…VFYL, MTLS…LVIV, and YMLF…VIVI. Topologically, residues 317–428 are cytoplasmic; it reads NTHHRSPSTH…WKYVAMVMDH (112 aa). The chain crosses the membrane as a helical span at residues 429-447; that stretch reads ILLGVFMLVCLIGTLAVFA.

This sequence belongs to the ligand-gated ion channel (TC 1.A.9) family. Acetylcholine receptor (TC 1.A.9.1) subfamily. Alpha-1/CHRNA1 sub-subfamily. As to quaternary structure, one of the alpha chains that assemble within the acetylcholine receptor, a pentamer of two alpha chains, a beta, a delta, and a gamma (in immature muscle) or epsilon (in mature muscle) chains. The muscle heteropentamer composed of alpha-1, beta-1, delta, epsilon subunits interacts with the alpha-conotoxin ImII.

The protein resides in the postsynaptic cell membrane. It localises to the cell membrane. The catalysed reaction is K(+)(in) = K(+)(out). It catalyses the reaction Na(+)(in) = Na(+)(out). Its function is as follows. Upon acetylcholine binding, the AChR responds by an extensive change in conformation that affects all subunits and leads to opening of an ion-conducting channel across the plasma membrane. The chain is Acetylcholine receptor subunit alpha (Chrna1) from Rattus norvegicus (Rat).